The primary structure comprises 160 residues: S-ribosylhomocysteine lyase (160 aa).

Fe cation-binding residues include H57, H61, and C127.

The protein belongs to the LuxS family. In terms of assembly, homodimer. Fe cation is required as a cofactor.

The catalysed reaction is S-(5-deoxy-D-ribos-5-yl)-L-homocysteine = (S)-4,5-dihydroxypentane-2,3-dione + L-homocysteine. Its function is as follows. Involved in the synthesis of autoinducer 2 (AI-2) which is secreted by bacteria and is used to communicate both the cell density and the metabolic potential of the environment. The regulation of gene expression in response to changes in cell density is called quorum sensing. Catalyzes the transformation of S-ribosylhomocysteine (RHC) to homocysteine (HC) and 4,5-dihydroxy-2,3-pentadione (DPD). This is S-ribosylhomocysteine lyase from Streptococcus gordonii (strain Challis / ATCC 35105 / BCRC 15272 / CH1 / DL1 / V288).